A 106-amino-acid polypeptide reads, in one-letter code: Small ribosomal subunit protein bS18 (106 aa).

The segment at 1-41 is disordered; it reads MAEEHSNQRSQTFNGERTNRPSRKPRGDGERRGRRQGGRRR.

This sequence belongs to the bacterial ribosomal protein bS18 family. As to quaternary structure, part of the 30S ribosomal subunit. Forms a tight heterodimer with protein bS6.

Its function is as follows. Binds as a heterodimer with protein bS6 to the central domain of the 16S rRNA, where it helps stabilize the platform of the 30S subunit. This chain is Small ribosomal subunit protein bS18, found in Oenococcus oeni (strain ATCC BAA-331 / PSU-1).